The following is a 202-amino-acid chain: Protein-methionine-sulfoxide reductase heme-binding subunit MsrQ (202 aa).

The next 6 membrane-spanning stretches (helical) occupy residues 8 to 28, 42 to 62, 75 to 95, 110 to 130, 147 to 167, and 169 to 189; these read LAVFLGALAVPAWWLYQAWIF, LGLGALVLLLLTLAMTPLQKL, LGLWCFTYVLLHLSAYYVFIL, PYIIVGMLGFVCLFLLAITSN, LVYLILGLGLLHMLWVVRADL, and EWTLYAVVGASLMLLRLPSIA.

It belongs to the MsrQ family. As to quaternary structure, heterodimer of a catalytic subunit (MsrP) and a heme-binding subunit (MsrQ). FMN serves as cofactor. The cofactor is heme b.

It localises to the cell inner membrane. In terms of biological role, part of the MsrPQ system that repairs oxidized periplasmic proteins containing methionine sulfoxide residues (Met-O), using respiratory chain electrons. Thus protects these proteins from oxidative-stress damage caused by reactive species of oxygen and chlorine generated by the host defense mechanisms. MsrPQ is essential for the maintenance of envelope integrity under bleach stress, rescuing a wide series of structurally unrelated periplasmic proteins from methionine oxidation. MsrQ provides electrons for reduction to the reductase catalytic subunit MsrP, using the quinone pool of the respiratory chain. This chain is Protein-methionine-sulfoxide reductase heme-binding subunit MsrQ, found in Pseudomonas aeruginosa (strain ATCC 15692 / DSM 22644 / CIP 104116 / JCM 14847 / LMG 12228 / 1C / PRS 101 / PAO1).